Consider the following 721-residue polypeptide: Polyribonucleotide nucleotidyltransferase (721 aa).

D487 and D493 together coordinate Mg(2+). In terms of domain architecture, KH spans 554 to 613 (PRIETFKIPTDKIREVIGTGGKVIREIVEKTGAKVNIDDDGTVKVASSDGESIKAAIKWI). Residues 623 to 691 (NAIYDGTVVK…DRGKTRLSMK (69 aa)) form the S1 motif domain. Positions 697-721 (TGEDLEAKQKAEAEKAKAEGAPAAE) are disordered. Over residues 701–714 (LEAKQKAEAEKAKA) the composition is skewed to basic and acidic residues.

It belongs to the polyribonucleotide nucleotidyltransferase family. Mg(2+) is required as a cofactor.

The protein resides in the cytoplasm. It carries out the reaction RNA(n+1) + phosphate = RNA(n) + a ribonucleoside 5'-diphosphate. In terms of biological role, involved in mRNA degradation. Catalyzes the phosphorolysis of single-stranded polyribonucleotides processively in the 3'- to 5'-direction. This is Polyribonucleotide nucleotidyltransferase from Rhodopseudomonas palustris (strain BisA53).